A 559-amino-acid chain; its full sequence is Formate--tetrahydrofolate ligase (559 aa).

Residue 68–75 (TPAGEGKT) coordinates ATP.

This sequence belongs to the formate--tetrahydrofolate ligase family. Homotetramer.

It catalyses the reaction (6S)-5,6,7,8-tetrahydrofolate + formate + ATP = (6R)-10-formyltetrahydrofolate + ADP + phosphate. It functions in the pathway one-carbon metabolism; tetrahydrofolate interconversion. The chain is Formate--tetrahydrofolate ligase from Moorella thermoacetica (Clostridium thermoaceticum).